We begin with the raw amino-acid sequence, 147 residues long: MALKRIQKELTDLQRDPPAQCSAGPVGDDLFHWQATIMGPNDSPYQGGVFFLTIHFPTDYPFKPPKVAFTTKIYHPNINSNGSICLDILRSQWSPALTVSKVLLSICSLLCDPNPDDPLVPEIAHTYKADREKYNRLAREWTQKYAM.

The region spanning 1–147 (MALKRIQKEL…AREWTQKYAM (147 aa)) is the UBC core domain. Catalysis depends on Cys-85, which acts as the Glycyl thioester intermediate.

This sequence belongs to the ubiquitin-conjugating enzyme family.

It catalyses the reaction S-ubiquitinyl-[E1 ubiquitin-activating enzyme]-L-cysteine + [E2 ubiquitin-conjugating enzyme]-L-cysteine = [E1 ubiquitin-activating enzyme]-L-cysteine + S-ubiquitinyl-[E2 ubiquitin-conjugating enzyme]-L-cysteine.. The protein operates within protein modification; protein ubiquitination. Functionally, accepts ubiquitin from the E1 complex and catalyzes its covalent attachment to other proteins. In vitro able to promote polyubiquitination using all 7 ubiquitin Lys residues, but may prefer 'Lys-11' and 'Lys-48'-linked polyubiquitination. The chain is Ubiquitin-conjugating enzyme E2 D4 (UBE2D4) from Homo sapiens (Human).